A 212-amino-acid chain; its full sequence is Uridine kinase (212 aa).

ATP is bound at residue G13 to S20.

This sequence belongs to the uridine kinase family.

It localises to the cytoplasm. The catalysed reaction is uridine + ATP = UMP + ADP + H(+). It catalyses the reaction cytidine + ATP = CMP + ADP + H(+). It participates in pyrimidine metabolism; CTP biosynthesis via salvage pathway; CTP from cytidine: step 1/3. It functions in the pathway pyrimidine metabolism; UMP biosynthesis via salvage pathway; UMP from uridine: step 1/1. This is Uridine kinase from Shewanella oneidensis (strain ATCC 700550 / JCM 31522 / CIP 106686 / LMG 19005 / NCIMB 14063 / MR-1).